The following is a 710-amino-acid chain: Methionine--tRNA ligase (710 aa).

A 'HIGH' region motif is present at residues P16–H26. Residues C147, C150, C160, and C163 each contribute to the Zn(2+) site. Positions K350–S354 match the 'KMSKS' region motif. K353 serves as a coordination point for ATP. The region spanning D604 to G710 is the tRNA-binding domain.

The protein belongs to the class-I aminoacyl-tRNA synthetase family. MetG type 1 subfamily. In terms of assembly, homodimer. It depends on Zn(2+) as a cofactor.

The protein resides in the cytoplasm. It catalyses the reaction tRNA(Met) + L-methionine + ATP = L-methionyl-tRNA(Met) + AMP + diphosphate. Is required not only for elongation of protein synthesis but also for the initiation of all mRNA translation through initiator tRNA(fMet) aminoacylation. The polypeptide is Methionine--tRNA ligase (Herminiimonas arsenicoxydans).